A 340-amino-acid chain; its full sequence is 3-isopropylmalate dehydrogenase (340 aa).

Positions 88, 98, 122, and 212 each coordinate substrate. Positions 212, 236, and 240 each coordinate Mg(2+). 272-284 contacts NAD(+); that stretch reads GSAPDIMGKGIAD.

Belongs to the isocitrate and isopropylmalate dehydrogenases family. LeuB type 2 subfamily. As to quaternary structure, homodimer. Mg(2+) is required as a cofactor. The cofactor is Mn(2+).

It is found in the cytoplasm. The enzyme catalyses (2R,3S)-3-isopropylmalate + NAD(+) = 4-methyl-2-oxopentanoate + CO2 + NADH. Its pathway is amino-acid biosynthesis; L-leucine biosynthesis; L-leucine from 3-methyl-2-oxobutanoate: step 3/4. Functionally, catalyzes the oxidation of 3-carboxy-2-hydroxy-4-methylpentanoate (3-isopropylmalate) to 3-carboxy-4-methyl-2-oxopentanoate. The product decarboxylates to 4-methyl-2 oxopentanoate. This is 3-isopropylmalate dehydrogenase from Corynebacterium efficiens (strain DSM 44549 / YS-314 / AJ 12310 / JCM 11189 / NBRC 100395).